Consider the following 503-residue polypeptide: Probable cytosol aminopeptidase (503 aa).

Mn(2+) is bound by residues Lys-270 and Asp-275. Lys-282 is an active-site residue. Positions 293, 352, and 354 each coordinate Mn(2+). Arg-356 is a catalytic residue.

The protein belongs to the peptidase M17 family. Requires Mn(2+) as cofactor.

The protein localises to the cytoplasm. It catalyses the reaction Release of an N-terminal amino acid, Xaa-|-Yaa-, in which Xaa is preferably Leu, but may be other amino acids including Pro although not Arg or Lys, and Yaa may be Pro. Amino acid amides and methyl esters are also readily hydrolyzed, but rates on arylamides are exceedingly low.. It carries out the reaction Release of an N-terminal amino acid, preferentially leucine, but not glutamic or aspartic acids.. In terms of biological role, presumably involved in the processing and regular turnover of intracellular proteins. Catalyzes the removal of unsubstituted N-terminal amino acids from various peptides. In Serratia proteamaculans (strain 568), this protein is Probable cytosol aminopeptidase.